A 146-amino-acid polypeptide reads, in one-letter code: Protein PBDC1 homolog (146 aa).

This sequence belongs to the PBDC1 family.

The protein resides in the cytoplasm. The sequence is that of Protein PBDC1 homolog from Saccharomyces cerevisiae (strain ATCC 204508 / S288c) (Baker's yeast).